We begin with the raw amino-acid sequence, 316 residues long: 1-aminocyclopropane-1-carboxylate oxidase 4 (316 aa).

In terms of domain architecture, Fe2OG dioxygenase spans 153–253; it reads PNFGTKVSNY…RMSLASFYNP (101 aa). Fe cation is bound by residues His-177, Asp-179, and His-234.

Belongs to the iron/ascorbate-dependent oxidoreductase family. The cofactor is Fe cation. As to expression, expressed in all of the floral organs examined apart from the sepals.

The catalysed reaction is 1-aminocyclopropane-1-carboxylate + L-ascorbate + O2 = ethene + L-dehydroascorbate + hydrogen cyanide + CO2 + 2 H2O. It functions in the pathway alkene biosynthesis; ethylene biosynthesis via S-adenosyl-L-methionine; ethylene from S-adenosyl-L-methionine: step 2/2. The protein is 1-aminocyclopropane-1-carboxylate oxidase 4 (ACO4) of Solanum lycopersicum (Tomato).